Consider the following 252-residue polypeptide: Trans-aconitate 2-methyltransferase (252 aa).

It belongs to the methyltransferase superfamily. Tam family.

Its subcellular location is the cytoplasm. It carries out the reaction trans-aconitate + S-adenosyl-L-methionine = (E)-3-(methoxycarbonyl)pent-2-enedioate + S-adenosyl-L-homocysteine. In terms of biological role, catalyzes the S-adenosylmethionine monomethyl esterification of trans-aconitate. The sequence is that of Trans-aconitate 2-methyltransferase from Escherichia coli O6:H1 (strain CFT073 / ATCC 700928 / UPEC).